A 333-amino-acid polypeptide reads, in one-letter code: Eukaryotic translation initiation factor 3 subunit H-B (333 aa).

The MPN domain occupies 20 to 154; it reads IQIEGLVVMK…LKAYRLTPKL (135 aa). The tract at residues 249-295 is disordered; the sequence is SKQQQQKHQYVQRRQQENAQRQSRGEPPLPEEDLTKMFKPPQPPPRM. Over residues 250–261 the composition is skewed to low complexity; sequence KQQQQKHQYVQR.

The protein belongs to the eIF-3 subunit H family. As to quaternary structure, component of the eukaryotic translation initiation factor 3 (eIF-3) complex, which is composed of 13 subunits: eif3a, eif3b, eif3c, eif3d, eif3e, eif3f, eif3g, eif3h, eif3i, eif3j, eif3k, eif3l and eif3m.

It is found in the cytoplasm. Component of the eukaryotic translation initiation factor 3 (eIF-3) complex, which is involved in protein synthesis of a specialized repertoire of mRNAs and, together with other initiation factors, stimulates binding of mRNA and methionyl-tRNAi to the 40S ribosome. The eIF-3 complex specifically targets and initiates translation of a subset of mRNAs involved in cell proliferation. The chain is Eukaryotic translation initiation factor 3 subunit H-B (eif3hb) from Danio rerio (Zebrafish).